Here is a 316-residue protein sequence, read N- to C-terminus: L-lactate dehydrogenase 3 (316 aa).

Residues V16, D37, R42, and Y68 each contribute to the NAD(+) site. Residue R91 participates in substrate binding. Residues S104, 121–123 (ASN), and T146 each bind NAD(+). A substrate-binding site is contributed by 123–126 (NPVD). 151–154 (DSSR) is a binding site for substrate. R156 and H171 together coordinate beta-D-fructose 1,6-bisphosphate. Catalysis depends on H178, which acts as the Proton acceptor. T233 serves as a coordination point for substrate.

This sequence belongs to the LDH/MDH superfamily. LDH family. Homotetramer.

It is found in the cytoplasm. It catalyses the reaction (S)-lactate + NAD(+) = pyruvate + NADH + H(+). It functions in the pathway fermentation; pyruvate fermentation to lactate; (S)-lactate from pyruvate: step 1/1. With respect to regulation, allosterically activated by fructose 1,6-bisphosphate (FBP). Functionally, catalyzes the conversion of lactate to pyruvate. The sequence is that of L-lactate dehydrogenase 3 from Bacillus thuringiensis subsp. konkukian (strain 97-27).